A 499-amino-acid chain; its full sequence is Glycerol kinase (499 aa).

Position 13 (Thr13) interacts with ADP. 3 residues coordinate ATP: Thr13, Thr14, and Ser15. Thr13 is a sn-glycerol 3-phosphate binding site. Arg17 provides a ligand contact to ADP. Positions 83, 84, 135, and 245 each coordinate sn-glycerol 3-phosphate. Glycerol-binding residues include Arg83, Glu84, Tyr135, Asp245, and Gln246. Residues Thr267 and Gly310 each contribute to the ADP site. Positions 267, 310, 314, and 411 each coordinate ATP. ADP is bound by residues Ala411 and Asn415.

This sequence belongs to the FGGY kinase family.

The catalysed reaction is glycerol + ATP = sn-glycerol 3-phosphate + ADP + H(+). It participates in polyol metabolism; glycerol degradation via glycerol kinase pathway; sn-glycerol 3-phosphate from glycerol: step 1/1. Inhibited by fructose 1,6-bisphosphate (FBP). In terms of biological role, key enzyme in the regulation of glycerol uptake and metabolism. Catalyzes the phosphorylation of glycerol to yield sn-glycerol 3-phosphate. This is Glycerol kinase from Xylella fastidiosa (strain 9a5c).